The primary structure comprises 118 residues: Large ribosomal subunit protein uL24 (118 aa).

The protein belongs to the universal ribosomal protein uL24 family. Part of the 50S ribosomal subunit.

One of two assembly initiator proteins, it binds directly to the 5'-end of the 23S rRNA, where it nucleates assembly of the 50S subunit. In terms of biological role, one of the proteins that surrounds the polypeptide exit tunnel on the outside of the subunit. The polypeptide is Large ribosomal subunit protein uL24 (Prochlorococcus marinus subsp. pastoris (strain CCMP1986 / NIES-2087 / MED4)).